Consider the following 816-residue polypeptide: Protein hunchback (816 aa).

Disordered stretches follow at residues leucine 33–aspartate 92, glutamine 129–asparagine 151, tyrosine 165–valine 185, and alanine 197–asparagine 229. Composition is skewed to low complexity over residues serine 49 to glutamine 60, glutamine 79 to glutamine 89, and glutamine 129 to glutamine 139. Position 199 is a phosphothreonine (threonine 199). Residues serine 209, serine 228, serine 230, and serine 231 each carry the phosphoserine modification. The span at glutamate 219–asparagine 229 shows a compositional bias: basic and acidic residues. 4 consecutive C2H2-type zinc fingers follow at residues tyrosine 261–histidine 283, leucine 290–histidine 312, phenylalanine 318–histidine 340, and tyrosine 346–histidine 364. 3 disordered regions span residues valine 387–glutamine 427, leucine 536–histidine 612, and glycine 679–threonine 734. 2 stretches are compositionally biased toward low complexity: residues serine 399–glutamine 427 and leucine 536–glutamine 560. Acidic residues predominate over residues asparagine 567–aspartate 578. Phosphoserine is present on residues serine 584 and serine 587. Low complexity predominate over residues serine 712–threonine 734. C2H2-type zinc fingers lie at residues tyrosine 763–histidine 785 and phenylalanine 791–histidine 815.

It belongs to the hunchback C2H2-type zinc-finger protein family.

Its subcellular location is the nucleus. In terms of biological role, gap class segmentation protein that controls development of head structures. This chain is Protein hunchback, found in Drosophila virilis (Fruit fly).